Consider the following 1403-residue polypeptide: Centrosomal protein of 162 kDa (1403 aa).

Positions 20 to 46 are disordered; the sequence is LSDDSFENSNKTPRQPNEDNKEMKKKD. A compositionally biased stretch (basic and acidic residues) spans 35–46; sequence PNEDNKEMKKKD. A phosphoserine mark is found at Ser160 and Ser163. Disordered regions lie at residues 169–243, 256–292, 306–348, and 453–606; these read LHRY…MLAN, VGLSSQEKATPKAKAPPEITDDGPAETGVPYGQSSGD, SLGD…ESDL, and NPSL…GGNR. Acidic residues predominate over residues 178-208; the sequence is PAEDGCENESEQEELPETYSDDFEDAEDADD. The segment covering 210–238 has biased composition (basic and acidic residues); it reads LITKDEETHPKENSESGKDSFPKQEEEKT. Over residues 485 to 500 the composition is skewed to basic residues; it reads PCKKARSTPSLPKRKP. 2 stretches are compositionally biased toward basic and acidic residues: residues 526–536 and 571–585; these read LEKKTSKDNTK and PHREGSPATPKRPED. Positions 614–1124 form a coiled coil; it reads KRAQDAEEKW…QKERRMMLSR (511 aa). The disordered stretch occupies residues 1126-1147; it reads IPRSREETAAKRLKKDPNRGHG. Residues 1128–1144 show a composition bias toward basic and acidic residues; that stretch reads RSREETAAKRLKKDPNR. Residues 1174–1386 adopt a coiled-coil conformation; it reads EENYRLRSEL…LDVLRELHRQ (213 aa).

This sequence belongs to the CEP162 family. As to quaternary structure, interacts with CPNE4. Interacts with alpha-tubulin. Interacts with CEP290.

It is found in the cytoplasm. The protein resides in the cytoskeleton. Its subcellular location is the microtubule organizing center. It localises to the centrosome. The protein localises to the centriole. It is found in the spindle. The protein resides in the nucleus. Functionally, required to promote assembly of the transition zone in primary cilia. Acts by specifically recognizing and binding the axonemal microtubule. Localizes to the distal ends of centrioles before ciliogenesis and directly binds to axonemal microtubule, thereby promoting and restricting transition zone formation specifically at the cilia base. Required to mediate CEP290 association with microtubules. The sequence is that of Centrosomal protein of 162 kDa (Cep162) from Mus musculus (Mouse).